The primary structure comprises 248 residues: Triosephosphate isomerase (248 aa).

The substrate site is built by N10 and K12. The active-site Electrophile is H95. E165 functions as the Proton acceptor in the catalytic mechanism.

This sequence belongs to the triosephosphate isomerase family. Homodimer.

The catalysed reaction is D-glyceraldehyde 3-phosphate = dihydroxyacetone phosphate. It functions in the pathway carbohydrate biosynthesis; gluconeogenesis. Its pathway is carbohydrate degradation; glycolysis; D-glyceraldehyde 3-phosphate from glycerone phosphate: step 1/1. The protein is Triosephosphate isomerase (TPI1) of Kluyveromyces marxianus (Yeast).